The following is a 574-amino-acid chain: PI-PLC X domain-containing protein DDB_G0269228 (574 aa).

A disordered region spans residues 1-42 (MFSSIMFKKKPKQNLNENEITSQSTTTTSTLSDSKPSEKKIK). A compositionally biased stretch (low complexity) spans 21–34 (TSQSTTTTSTLSDS). A PI-PLC X-box domain is found at 270–449 (GIKSSSLRVP…LKKRIINDDG (180 aa)).

This chain is PI-PLC X domain-containing protein DDB_G0269228, found in Dictyostelium discoideum (Social amoeba).